The primary structure comprises 191 residues: 3-isopropylmalate dehydratase small subunit (191 aa).

This sequence belongs to the LeuD family. LeuD type 1 subfamily. As to quaternary structure, heterodimer of LeuC and LeuD.

The enzyme catalyses (2R,3S)-3-isopropylmalate = (2S)-2-isopropylmalate. Its pathway is amino-acid biosynthesis; L-leucine biosynthesis; L-leucine from 3-methyl-2-oxobutanoate: step 2/4. In terms of biological role, catalyzes the isomerization between 2-isopropylmalate and 3-isopropylmalate, via the formation of 2-isopropylmaleate. The sequence is that of 3-isopropylmalate dehydratase small subunit from Staphylococcus saprophyticus subsp. saprophyticus (strain ATCC 15305 / DSM 20229 / NCIMB 8711 / NCTC 7292 / S-41).